A 134-amino-acid chain; its full sequence is kinetoplast-associated protein 3 (134 aa).

A propeptide spanning residues M1 to R10 is cleaved from the precursor. The segment covering P106–K124 has biased composition (low complexity). The segment at P106–K134 is disordered. The segment covering T125–K134 has biased composition (basic residues).

Belongs to the KAP family. In terms of assembly, associates with the kinetoplast DNA network.

The protein resides in the mitochondrion matrix. It localises to the kinetoplast. Its function is as follows. Histone H1-like DNA-binding protein involved in the organization and segregation of kinetoplast DNA (kDNA). The mitochondrial DNA of kinetoplastid protozoa consists of about 5,000 minicircles and 20 to 30 maxicircles. These circular DNAs are held together by catenation into a highly organized compact disk structure referred to as a kinetoplast DNA (kDNA) network. Binds preferentially to a specific fragment of minicircle DNA and is able to compact kDNA networks through DNA charge neutralization and condensation. The chain is kinetoplast-associated protein 3 (KAP3) from Crithidia fasciculata.